Consider the following 103-residue polypeptide: Large ribosomal subunit protein bL21 (103 aa).

The protein belongs to the bacterial ribosomal protein bL21 family. In terms of assembly, part of the 50S ribosomal subunit. Contacts protein L20.

Its function is as follows. This protein binds to 23S rRNA in the presence of protein L20. This is Large ribosomal subunit protein bL21 from Pseudomonas syringae pv. tomato (strain ATCC BAA-871 / DC3000).